Consider the following 518-residue polypeptide: Glutamate--cysteine ligase (518 aa).

This sequence belongs to the glutamate--cysteine ligase type 1 family. Type 1 subfamily.

It catalyses the reaction L-cysteine + L-glutamate + ATP = gamma-L-glutamyl-L-cysteine + ADP + phosphate + H(+). It participates in sulfur metabolism; glutathione biosynthesis; glutathione from L-cysteine and L-glutamate: step 1/2. This chain is Glutamate--cysteine ligase, found in Salmonella paratyphi C (strain RKS4594).